The sequence spans 194 residues: dCTP deaminase (194 aa).

DCTP contacts are provided by residues 110 to 115 (RSSLAR), aspartate 128, 136 to 138 (VLE), tyrosine 171, lysine 178, and glutamine 182. Residue glutamate 138 is the Proton donor/acceptor of the active site. The segment at 175-194 (KDAKYKNQQSAVSSRINQDD) is disordered. Over residues 180-194 (KNQQSAVSSRINQDD) the composition is skewed to polar residues.

This sequence belongs to the dCTP deaminase family. As to quaternary structure, homotrimer.

It carries out the reaction dCTP + H2O + H(+) = dUTP + NH4(+). Its pathway is pyrimidine metabolism; dUMP biosynthesis; dUMP from dCTP (dUTP route): step 1/2. Its function is as follows. Catalyzes the deamination of dCTP to dUTP. The protein is dCTP deaminase of Actinobacillus pleuropneumoniae serotype 5b (strain L20).